The sequence spans 496 residues: Galactokinase (496 aa).

Alanine 2 carries the post-translational modification N-acetylalanine. Alpha-D-galactose is bound by residues arginine 56, glutamate 62, histidine 63, and aspartate 65. Positions 161, 163, 165, and 166 each coordinate ATP. Aspartate 210 contributes to the alpha-D-galactose binding site. The Proton acceptor role is filled by aspartate 210. ATP contacts are provided by serine 252, glutamine 253, and lysine 254. Tyrosine 262 lines the alpha-D-galactose pocket.

It belongs to the GHMP kinase family. GalK subfamily. Mg(2+) is required as a cofactor. Mn(2+) serves as cofactor. The cofactor is Ca(2+). Expressed in roots, stems, leaves, flowers and young siliques. Higher expression in the elongating middle stem region than in the lower or upper stem region.

It catalyses the reaction alpha-D-galactose + ATP = alpha-D-galactose 1-phosphate + ADP + H(+). It functions in the pathway carbohydrate metabolism; galactose metabolism. In terms of biological role, sugar-1-kinase with a very high substrate specificity for the alpha-anomeric configuration of D-galacose (D-Gal). Also efficiently converts 2-deoxy-D-Gal to 2-deoxy-D-al-1-phosphate. This chain is Galactokinase (GAL1), found in Arabidopsis thaliana (Mouse-ear cress).